A 223-amino-acid chain; its full sequence is Deoxyribose-phosphate aldolase 2 (223 aa).

The Proton donor/acceptor role is filled by D89. The active-site Schiff-base intermediate with acetaldehyde is K152. The active-site Proton donor/acceptor is the K181.

This sequence belongs to the DeoC/FbaB aldolase family. DeoC type 1 subfamily.

The protein localises to the cytoplasm. It catalyses the reaction 2-deoxy-D-ribose 5-phosphate = D-glyceraldehyde 3-phosphate + acetaldehyde. It functions in the pathway carbohydrate degradation; 2-deoxy-D-ribose 1-phosphate degradation; D-glyceraldehyde 3-phosphate and acetaldehyde from 2-deoxy-alpha-D-ribose 1-phosphate: step 2/2. Its function is as follows. Catalyzes a reversible aldol reaction between acetaldehyde and D-glyceraldehyde 3-phosphate to generate 2-deoxy-D-ribose 5-phosphate. This Bacillus licheniformis (strain ATCC 14580 / DSM 13 / JCM 2505 / CCUG 7422 / NBRC 12200 / NCIMB 9375 / NCTC 10341 / NRRL NRS-1264 / Gibson 46) protein is Deoxyribose-phosphate aldolase 2.